Reading from the N-terminus, the 930-residue chain is Semaphorin-6C (930 aa).

Residues 1-24 (MPRAPHFMPLLLLLLLLSLPHTQA) form the signal peptide. Residues 25–604 (AFPQDPLPLL…ASASRSVPIP (580 aa)) lie on the Extracellular side of the membrane. The Sema domain maps to 30–516 (PLPLLISDLQ…FSGCIVYLPL (487 aa)). Asn70 carries an N-linked (GlcNAc...) asparagine glycan. Cystine bridges form between Cys111/Cys121, Cys139/Cys148, Cys262/Cys373, and Cys287/Cys332. N-linked (GlcNAc...) asparagine glycosylation occurs at Asn286. The N-linked (GlcNAc...) asparagine glycan is linked to Asn437. 4 disulfide bridges follow: Cys479/Cys510, Cys519/Cys537, Cys525/Cys570, and Cys529/Cys545. The disordered stretch occupies residues 554-593 (TDVDQAGNQESMEHGDCQDGATGSQSGPGDSAYGVRRDLP). A helical membrane pass occupies residues 605 to 625 (LLLASVAAAFALGASVSGLLV). Over 626–930 (SCACRRAHRR…AVPNGGRFNF (305 aa)) the chain is Cytoplasmic. 4 disordered regions span residues 654-674 (LARLHGGGPEPPPPSKDGDAV), 716-761 (GDPW…PGQA), 775-882 (HGPQ…PGKH), and 908-930 (SLKPPLVGPSSRQAVPNGGRFNF). Residues 829–844 (ASAPARPALSAPAPRL) show a composition bias toward low complexity.

The protein belongs to the semaphorin family. As to expression, in adult tissues, expressed only in skeletal muscle.

It localises to the cell membrane. In terms of biological role, shows growth cone collapsing activity on dorsal root ganglion (DRG) neurons in vitro. May be a stop signal for the DRG neurons in their target areas, and possibly also for other neurons. May also be involved in the maintenance and remodeling of neuronal connections. The chain is Semaphorin-6C (SEMA6C) from Homo sapiens (Human).